Reading from the N-terminus, the 350-residue chain is tRNA uridine(34) hydroxylase (350 aa).

In terms of domain architecture, Rhodanese spans 146-240 (DDPDALFIDM…YARKAREQGL (95 aa)). Cysteine 200 serves as the catalytic Cysteine persulfide intermediate.

This sequence belongs to the TrhO family.

The catalysed reaction is uridine(34) in tRNA + AH2 + O2 = 5-hydroxyuridine(34) in tRNA + A + H2O. Catalyzes oxygen-dependent 5-hydroxyuridine (ho5U) modification at position 34 in tRNAs. The sequence is that of tRNA uridine(34) hydroxylase from Shigella flexneri serotype 5b (strain 8401).